A 186-amino-acid polypeptide reads, in one-letter code: Putative adenylate kinase (186 aa).

5 residues coordinate ATP: Gly10, Gly12, Lys13, Thr14, and Ser15. The segment at 30–53 (HLNELIKEEHLYTEVDEKRDSVVA) is NMP. The tract at residues 108–118 (KRGYSEEKVNE) is LID. Residue Arg109 coordinates ATP.

Belongs to the adenylate kinase family. AK6 subfamily. As to quaternary structure, interacts with uS11. Not a structural component of 40S pre-ribosomes, but transiently interacts with them by binding to uS11.

It carries out the reaction AMP + ATP = 2 ADP. The catalysed reaction is ATP + H2O = ADP + phosphate + H(+). In terms of biological role, broad-specificity nucleoside monophosphate (NMP) kinase that catalyzes the reversible transfer of the terminal phosphate group between nucleoside triphosphates and monophosphates. Also has ATPase activity. Involved in the late maturation steps of the 30S ribosomal particles, specifically 16S rRNA maturation. While NMP activity is not required for ribosome maturation, ATPase activity is. Associates transiently with small ribosomal subunit protein uS11. ATP hydrolysis breaks the interaction with uS11. May temporarily remove uS11 from the ribosome to enable a conformational change of the ribosomal RNA that is needed for the final maturation step of the small ribosomal subunit. The sequence is that of Putative adenylate kinase from Methanosarcina acetivorans (strain ATCC 35395 / DSM 2834 / JCM 12185 / C2A).